The following is a 282-amino-acid chain: Homeobox protein Hox-C12 (282 aa).

Disordered stretches follow at residues 94-129 (YYREPCAEGGGGGLKREERGRDPGAGPGAALLPLEP) and 147-214 (GGDG…NSRS). Positions 162–175 (SCQSLESDSSSSLL) are enriched in low complexity. The segment at residues 214–273 (SRKKRKPYSKLQLAELEGEFLVNEFITRQRRRELSDRLNLSDQQVKIWFQNRRMKKKRLL) is a DNA-binding region (homeobox).

The protein belongs to the Abd-B homeobox family.

Its subcellular location is the nucleus. Its function is as follows. Sequence-specific transcription factor which is part of a developmental regulatory system that provides cells with specific positional identities on the anterior-posterior axis. The polypeptide is Homeobox protein Hox-C12 (HOXC12) (Homo sapiens (Human)).